The following is a 139-amino-acid chain: Large-conductance mechanosensitive channel (139 aa).

Helical transmembrane passes span 9 to 29 (AFAV…GAAF) and 79 to 99 (IQTV…VKAI).

The protein belongs to the MscL family. In terms of assembly, homopentamer.

The protein localises to the cell inner membrane. Functionally, channel that opens in response to stretch forces in the membrane lipid bilayer. May participate in the regulation of osmotic pressure changes within the cell. This is Large-conductance mechanosensitive channel from Pseudomonas putida (strain ATCC 47054 / DSM 6125 / CFBP 8728 / NCIMB 11950 / KT2440).